The chain runs to 51 residues: Basic phospholipase A2 homolog BmatTX-I (51 aa).

Cysteine 28 and cysteine 44 are joined by a disulfide.

Monomer. As to expression, expressed by the venom gland.

It is found in the secreted. Snake venom phospholipase A2 homolog that lacks enzymatic activity. Shows high myotoxic activity, neutrophile activation (demonstrated by activation induction of IL-1beta production), slight cytotoxicity against Jurkat (leukemia T) and SK-BR-3 (breast adenocarcinoma) tumor cell lines, and slight antiparasitic activity against promastigote forms of Leishmania amazonensis. A model of myotoxic mechanism has been proposed: an apo Lys49-PLA2 is activated by the entrance of a hydrophobic molecule (e.g. fatty acid) at the hydrophobic channel of the protein leading to a reorientation of a monomer. This reorientation causes a transition between 'inactive' to 'active' states, causing alignment of C-terminal and membrane-docking sites (MDoS) side-by-side and putting the membrane-disruption sites (MDiS) in the same plane, exposed to solvent and in a symmetric position for both monomers. The MDoS region stabilizes the toxin on membrane by the interaction of charged residues with phospholipid head groups. Subsequently, the MDiS region destabilizes the membrane with penetration of hydrophobic residues. This insertion causes a disorganization of the membrane, allowing an uncontrolled influx of ions (i.e. calcium and sodium), and eventually triggering irreversible intracellular alterations and cell death. This chain is Basic phospholipase A2 homolog BmatTX-I, found in Bothrops mattogrossensis (Pitviper).